The primary structure comprises 606 residues: Zinc finger protein 214 (606 aa).

The KRAB domain occupies 3-83; that stretch reads VTFEDVTIIF…GAQMYENQNY (81 aa). The C2H2-type 1; degenerate zinc-finger motif lies at 275 to 297; it reads YGCDEVDGNFHQSSGVHFHQRVH. A C2H2-type 2 zinc finger spans residues 303–325; the sequence is YSCNACGKSFSQISSLHNHQRVH. The segment at 330-352 adopts a C2H2-type 3; degenerate zinc-finger fold; that stretch reads FYKIECDKDLSRNSLLHIHQRLH. C2H2-type zinc fingers lie at residues 358 to 380, 386 to 408, 414 to 436, 442 to 464, 470 to 492, 498 to 520, 526 to 548, and 554 to 576; these read FKCN…QRVH, YKCD…QLVH, YKCE…QRVH, YKCD…QRVH, YTCP…QRVH, YKCH…QRVH, and YQCA…QRVH.

Belongs to the krueppel C2H2-type zinc-finger protein family.

It is found in the nucleus. May be involved in transcriptional regulation. The sequence is that of Zinc finger protein 214 (ZNF214) from Homo sapiens (Human).